The chain runs to 569 residues: Cationic amino acid transporter 9, chloroplastic (569 aa).

The transit peptide at 1–41 (MGGHEGFSNQRLSSATWFSHFRASALRSKSLPPPSSQTAVR) directs the protein to the chloroplast. Transmembrane regions (helical) follow at residues 53-73 (GLFD…VFVV), 81-101 (AGPG…LNAL), 113-135 (VVGG…LVFV), 155-175 (YAVA…LWMG), 181-201 (LGGL…LTLV), 215-235 (VMTA…AFEI), 250-270 (AVLT…AVAN), 284-304 (IGIM…CLVL), 333-353 (ILIS…GLYV), 406-428 (HILS…ALRL), 444-464 (WQEG…AGVF), 467-487 (FSAS…ASAV), 502-522 (FSCP…IFLF), and 528-548 (EAWI…ALYG).

It belongs to the amino acid-polyamine-organocation (APC) superfamily. Cationic amino acid transporter (CAT) (TC 2.A.3.3) family. As to expression, expressed in roots, stems, flowers, and leaves.

It localises to the plastid. Its subcellular location is the chloroplast membrane. Its function is as follows. Permease involved in the transport of the cationic amino acids. The protein is Cationic amino acid transporter 9, chloroplastic (CAT9) of Arabidopsis thaliana (Mouse-ear cress).